The sequence spans 677 residues: Methionine--tRNA ligase (677 aa).

A 'HIGH' region motif is present at residues 14–24 (PYANGAIHLGH). Positions 145, 148, 158, and 161 each coordinate Zn(2+). Positions 330 to 334 (KMSKS) match the 'KMSKS' region motif. K333 contributes to the ATP binding site. One can recognise a tRNA-binding domain in the interval 576–677 (DFAKVDLRVA…EGALPGMRVM (102 aa)).

The protein belongs to the class-I aminoacyl-tRNA synthetase family. MetG type 1 subfamily. Homodimer. It depends on Zn(2+) as a cofactor.

The protein resides in the cytoplasm. It carries out the reaction tRNA(Met) + L-methionine + ATP = L-methionyl-tRNA(Met) + AMP + diphosphate. In terms of biological role, is required not only for elongation of protein synthesis but also for the initiation of all mRNA translation through initiator tRNA(fMet) aminoacylation. This is Methionine--tRNA ligase from Saccharophagus degradans (strain 2-40 / ATCC 43961 / DSM 17024).